The chain runs to 279 residues: Thymidylate synthase 1 (279 aa).

Residue 141 to 142 coordinates dUMP; the sequence is RR. The active-site Nucleophile is cysteine 161. DUMP contacts are provided by residues 181–184, asparagine 192, and 222–224; these read RSND and HVY. Aspartate 184 serves as a coordination point for (6R)-5,10-methylene-5,6,7,8-tetrahydrofolate. Alanine 278 contributes to the (6R)-5,10-methylene-5,6,7,8-tetrahydrofolate binding site.

It belongs to the thymidylate synthase family. Bacterial-type ThyA subfamily. Homodimer.

It localises to the cytoplasm. The catalysed reaction is dUMP + (6R)-5,10-methylene-5,6,7,8-tetrahydrofolate = 7,8-dihydrofolate + dTMP. It participates in pyrimidine metabolism; dTTP biosynthesis. Catalyzes the reductive methylation of 2'-deoxyuridine-5'-monophosphate (dUMP) to 2'-deoxythymidine-5'-monophosphate (dTMP) while utilizing 5,10-methylenetetrahydrofolate (mTHF) as the methyl donor and reductant in the reaction, yielding dihydrofolate (DHF) as a by-product. This enzymatic reaction provides an intracellular de novo source of dTMP, an essential precursor for DNA biosynthesis. This Bacillus subtilis (strain 168) protein is Thymidylate synthase 1.